A 269-amino-acid chain; its full sequence is Indole-3-glycerol phosphate synthase (269 aa).

The protein belongs to the TrpC family.

The enzyme catalyses 1-(2-carboxyphenylamino)-1-deoxy-D-ribulose 5-phosphate + H(+) = (1S,2R)-1-C-(indol-3-yl)glycerol 3-phosphate + CO2 + H2O. It participates in amino-acid biosynthesis; L-tryptophan biosynthesis; L-tryptophan from chorismate: step 4/5. In Roseiflexus sp. (strain RS-1), this protein is Indole-3-glycerol phosphate synthase.